The primary structure comprises 186 residues: Chromophore lyase CpcS/CpeS 1 (186 aa).

It belongs to the CpcS/CpeS biliprotein lyase family.

Covalently attaches a chromophore to Cys residue(s) of phycobiliproteins. This chain is Chromophore lyase CpcS/CpeS 1, found in Synechocystis sp. (strain ATCC 27184 / PCC 6803 / Kazusa).